The primary structure comprises 140 residues: MAGLPDRDKLIRNFSRCLNWEEKYLYIIELGGQLAPLTEQQRHPENLISGCQSQVWIAMTLSAEGHVIFAGDSDAAIVKGLVAVVFILYHDLTPQQIISLDVRPFFADLALSQHLTPSRSQGLEAMIRAIRTKVANLSAH.

Cys-51 functions as the Cysteine persulfide intermediate in the catalytic mechanism.

The protein belongs to the SufE family. Homodimer. Interacts with SufS.

It localises to the cytoplasm. Its pathway is cofactor biosynthesis; iron-sulfur cluster biosynthesis. Participates in cysteine desulfuration mediated by SufS. Cysteine desulfuration mobilizes sulfur from L-cysteine to yield L-alanine and constitutes an essential step in sulfur metabolism for biosynthesis of a variety of sulfur-containing biomolecules. Functions as a sulfur acceptor for SufS, by mediating the direct transfer of the sulfur atom from the S-sulfanylcysteine of SufS, an intermediate product of cysteine desulfuration process. This chain is Cysteine desulfuration protein SufE, found in Yersinia pestis bv. Antiqua (strain Antiqua).